A 258-amino-acid polypeptide reads, in one-letter code: MKITKLEKKKRLYLMELDNGDKCYITEDTIVRFMLSRDKVISEEELKEIQDFAQFSYGKNLALYHLSFKARTEKEVREYLKKYDIDKNIVSQVIANLKEDKWINDGQYAYAIINTNQLSGDKGPYVLTQKLSQKGISKSTIEENLKEFDFSEVAQRVANKLLKKYEGKLPARALQDKIIQNLTNKGFSYSDAKIAFDDLDSQVDQETTQELIFKELDKQYTKYARKYEGYELKQRLTQVLARKGYDFSDIASALREYL.

Belongs to the RecX family.

It is found in the cytoplasm. Modulates RecA activity. The chain is Regulatory protein RecX from Streptococcus pneumoniae (strain JJA).